A 1318-amino-acid chain; its full sequence is Major tegument protein (1318 aa).

The protein belongs to the herpesviridae MTP family. As to quaternary structure, interacts with host DAXX; this interaction disrupts the chromatin remodeling complex ATRX:DAXX and thus allows viral transcription. Interacts with host SMC6; this interaction targets SMC5-SMC6 complex for proteasomal degradation.

It is found in the virion tegument. It localises to the host nucleus. Functionally, tegument protein that plays a role in the inhibition of host intrinsic defenses to promote viral early gene activation. Interacts with host DAXX and thereby disrupts the complex between DAXX and ATRX. Suppresses the DAXX-ATRX dependent deposition of histone H3.3 on viral chromatin allowing viral transcription. Targets also host SMC5/6 for proteasomal degradation in a CUL7 and calpain-dependent manner to support nuclear membrane-less replication compartment formation and lytic virus replication. This is Major tegument protein from Homo sapiens (Human).